A 744-amino-acid polypeptide reads, in one-letter code: Deleted in azoospermia protein 1 (744 aa).

Residues 1 to 10 (MSAANPETPN) show a composition bias toward polar residues. Positions 1 to 27 (MSAANPETPNSTISREASTQSSSAAAS) are disordered. Residues 11–27 (STISREASTQSSSAAAS) are compositionally biased toward low complexity. Positions 40–115 (NTVFVGGIDA…KKLKLGPAIR (76 aa)) constitute an RRM 1 domain. Positions 163 to 175 (QHVQSAANPETPN) are enriched in polar residues. Residues 163–192 (QHVQSAANPETPNSTISREASTQSSSAAAS) are disordered. Positions 176–192 (STISREASTQSSSAAAS) are enriched in low complexity. The RRM 2 domain maps to 205–280 (NTVFVGGIDA…KKLKLGPAIR (76 aa)). Residues 328-340 (QHVQSAANPETPN) show a composition bias toward polar residues. Residues 328–357 (QHVQSAANPETPNSTISREASTQSSSAAAS) are disordered. A compositionally biased stretch (low complexity) spans 341-357 (STISREASTQSSSAAAS). An RRM 3 domain is found at 370–445 (NTVFVGGIDA…KKLKLGPAIR (76 aa)). DAZ domains follow at residues 497-520 (AYSA…YNYQ), 521-544 (EYPT…YNYQ), 545-568 (PFPA…YNYQ), 569-592 (AFPA…YNYQ), 593-616 (PFPA…YNYQ), 617-640 (AFPA…YNYQ), 641-664 (AFPA…YNYQ), 665-688 (AFPA…YNYQ), and 689-712 (AFPA…YNYQ).

The protein belongs to the RRM DAZ family. In terms of assembly, forms a heterodimer with BOLL and DAZL. Interacts with PUM2, DAZAP1, DAZAP2, DZIP1 and DZIP3. In terms of tissue distribution, testis-specific. Expression restricted to premeiotic germ cells, particularly in spermatogonia (at protein level).

It is found in the cytoplasm. The protein localises to the nucleus. In terms of biological role, RNA-binding protein that plays an essential role in spermatogenesis. May act by binding to the 3'-UTR of mRNAs and regulating their translation. Promotes germ-cell progression to meiosis and formation of haploid germ cells. The sequence is that of Deleted in azoospermia protein 1 (DAZ1) from Homo sapiens (Human).